The chain runs to 204 residues: Crossover junction endodeoxyribonuclease RuvC (204 aa).

Catalysis depends on residues Asp-7, Glu-68, and Asp-141. Asp-7, Glu-68, and Asp-141 together coordinate Mg(2+).

This sequence belongs to the RuvC family. As to quaternary structure, homodimer which binds Holliday junction (HJ) DNA. The HJ becomes 2-fold symmetrical on binding to RuvC with unstacked arms; it has a different conformation from HJ DNA in complex with RuvA. In the full resolvosome a probable DNA-RuvA(4)-RuvB(12)-RuvC(2) complex forms which resolves the HJ. Mg(2+) serves as cofactor.

Its subcellular location is the cytoplasm. The enzyme catalyses Endonucleolytic cleavage at a junction such as a reciprocal single-stranded crossover between two homologous DNA duplexes (Holliday junction).. Functionally, the RuvA-RuvB-RuvC complex processes Holliday junction (HJ) DNA during genetic recombination and DNA repair. Endonuclease that resolves HJ intermediates. Cleaves cruciform DNA by making single-stranded nicks across the HJ at symmetrical positions within the homologous arms, yielding a 5'-phosphate and a 3'-hydroxyl group; requires a central core of homology in the junction. The consensus cleavage sequence is 5'-(A/T)TT(C/G)-3'. Cleavage occurs on the 3'-side of the TT dinucleotide at the point of strand exchange. HJ branch migration catalyzed by RuvA-RuvB allows RuvC to scan DNA until it finds its consensus sequence, where it cleaves and resolves the cruciform DNA. This is Crossover junction endodeoxyribonuclease RuvC from Clavibacter sepedonicus (Clavibacter michiganensis subsp. sepedonicus).